The sequence spans 371 residues: UDP-N-acetylglucosamine--N-acetylmuramyl-(pentapeptide) pyrophosphoryl-undecaprenol N-acetylglucosamine transferase (371 aa).

Residues 15–17, Asn-126, Arg-172, Ser-199, Ile-256, 275–280, and Gln-301 contribute to the UDP-N-acetyl-alpha-D-glucosamine site; these read TGG and ALTVSE.

Belongs to the glycosyltransferase 28 family. MurG subfamily.

The protein localises to the cell inner membrane. The enzyme catalyses di-trans,octa-cis-undecaprenyl diphospho-N-acetyl-alpha-D-muramoyl-L-alanyl-D-glutamyl-meso-2,6-diaminopimeloyl-D-alanyl-D-alanine + UDP-N-acetyl-alpha-D-glucosamine = di-trans,octa-cis-undecaprenyl diphospho-[N-acetyl-alpha-D-glucosaminyl-(1-&gt;4)]-N-acetyl-alpha-D-muramoyl-L-alanyl-D-glutamyl-meso-2,6-diaminopimeloyl-D-alanyl-D-alanine + UDP + H(+). It functions in the pathway cell wall biogenesis; peptidoglycan biosynthesis. Functionally, cell wall formation. Catalyzes the transfer of a GlcNAc subunit on undecaprenyl-pyrophosphoryl-MurNAc-pentapeptide (lipid intermediate I) to form undecaprenyl-pyrophosphoryl-MurNAc-(pentapeptide)GlcNAc (lipid intermediate II). The sequence is that of UDP-N-acetylglucosamine--N-acetylmuramyl-(pentapeptide) pyrophosphoryl-undecaprenol N-acetylglucosamine transferase from Francisella philomiragia subsp. philomiragia (strain ATCC 25017 / CCUG 19701 / FSC 153 / O#319-036).